The sequence spans 472 residues: MDNSDCRVPWASAPSSMTCLSLDPTKCHSSSSSSKCQPDCDTPPAAEKIQRHIAYTQRCPGKITTLLAVLLLVLPLSFTPAHSCGPGRGLGRRRERNLYPLVLKQTIPNLSEYTSGASGPLEGPIRRDSPKFKDLVPNYNRDILFRDDEGTGADRLMSKRCKEKLNVLAYSVMNEWPGVRLLVAESWDEDYQHGKESLHYEGRAVTIATSDRDQSKYGMLARLAVEAGFDWVSYVSRRHIYCSVKSDSSISSHVHGCFTPESTALLEGGVRKPLGELSIGDRVLSMTSNGQPVYSEVILFMDRNLKQMQNFVRLHTAGGAVLTVTPAHLVSVWQPERQELTFTFADRIEERQHVLVRNEETGELRPDQVIKVESVRSMGVVAPLTREGTIVVNSVAASCYAVINSQSLAHWGLAPMRLLSTLEAWLPAKDQLRSSKDHPKDSSAERQNGIHWYAEALYKIKDYVLPKSWRHD.

Residue cysteine 84 is the site of N-palmitoyl cysteine attachment. 5 residues coordinate Ca(2+): glutamate 149, aspartate 154, glutamate 185, aspartate 188, and aspartate 190. Glycine 256 is lipidated: Cholesterol glycine ester.

The protein belongs to the hedgehog family. Interacts with shf. In terms of processing, the C-terminal part of the hedgehog protein precursor displays an autoproteolysis activity that results in the cleavage of the full-length protein into two parts (N-product and C-product). In addition, the C-terminal part displays a cholesterol transferase activity that results by the covalent attachment of a cholesterol moiety to the C-terminal of the newly generated N-product. The N-product is the active species in both local and long-range signaling, whereas the C-product has no signaling activity. Cholesterylation is required for N-product targeting to lipid rafts and multimerization. Post-translationally, N-palmitoylation by Rasp of the hedgehog N-product, within the secretory pathway, is required for the embryonic and larval patterning activities of the hedgehog signal.

The protein resides in the nucleus. Its subcellular location is the cytoplasm. It localises to the cell membrane. It carries out the reaction glycyl-L-cysteinyl-[protein] + cholesterol + H(+) = [protein]-C-terminal glycyl cholesterol ester + N-terminal L-cysteinyl-[protein]. Functionally, the C-terminal part of the hedgehog protein precursor displays an autoproteolysis activity that results in the cleavage of the full-length protein into two parts (N-product and C-product). In addition, the C-terminal part displays a cholesterol transferase activity that results by the covalent attachment of a cholesterol moiety to the C-terminal of the newly generated N-product. Once cleaved, the C-product has no signaling activity and diffuses from the cell. Its function is as follows. The dually lipidated hedgehog protein N-product is a morphogen which is essential for a variety of patterning events during development. Establishes the anterior-posterior axis of the embryonic segments and patterns the larval imaginal disks. Binds to the patched (ptc) receptor, which functions in association with smoothened (smo), to activate the transcription of target genes wingless (wg), decapentaplegic (dpp) and ptc. In the absence of hh, ptc represses the constitutive signaling activity of smo through fused (fu). Essential component of a signaling pathway which regulates the Duox-dependent gut immune response to bacterial uracil; required to activate Cad99C-dependent endosome formation, norpA-dependent Ca2+ mobilization and p38 MAPK, which are essential steps in the Duox-dependent production of reactive oxygen species (ROS) in response to intestinal bacterial infection. During photoreceptor differentiation, it up-regulates transcription of Ubr3, which in turn promotes the hh-signaling pathway by mediating the ubiquitination and degradation of cos. The sequence is that of Protein hedgehog from Drosophila ananassae (Fruit fly).